A 66-amino-acid polypeptide reads, in one-letter code: Jindongenin-1a (66 aa).

The signal sequence occupies residues 1–22; that stretch reads MFTLKKPLLLLFFLGTVSLSLC. Residues 23-40 constitute a propeptide that is removed on maturation; sequence EQERAADDDEGEVIEEEV. A disulfide bridge links Cys60 with Cys66.

In terms of tissue distribution, expressed by the skin glands.

Its subcellular location is the secreted. In terms of biological role, displays broad-spectrum antibacterial activity against a range of Gram-positive and Gram-negative bacteria. Also displays antifungal activity against C.albicans ATCC 2002. Has low hemolytic activity, low cytotoxicity and low antioxidant activity. This is Jindongenin-1a from Amolops jingdongensis (Chinese torrent frog).